The primary structure comprises 1040 residues: Multidrug resistance protein MdtB (1040 aa).

12 helical membrane passes run 25–45 (LLMA…PVAA), 347–367 (LMLA…NIPA), 369–389 (IIPG…MVFL), 396–416 (LTLM…IVVI), 440–460 (IGFT…PLLF), 472–492 (FAVT…TLTP), 537–557 (WLTL…WIVI), 863–883 (LGST…VLGV), 888–908 (FIHP…ALLA), 910–930 (IIAG…LIGI), 968–988 (ILMT…STGV), and 998–1018 (IAMV…TPVI).

The protein belongs to the resistance-nodulation-cell division (RND) (TC 2.A.6) family. MdtB subfamily. As to quaternary structure, part of a tripartite efflux system composed of MdtA, MdtB and MdtC. MdtB forms a heteromultimer with MdtC.

It localises to the cell inner membrane. The polypeptide is Multidrug resistance protein MdtB (Salmonella paratyphi B (strain ATCC BAA-1250 / SPB7)).